A 36-amino-acid polypeptide reads, in one-letter code: Photosystem I reaction center subunit VIII (36 aa).

A helical membrane pass occupies residues 8 to 28 (AILVPIVGLVFPALSMALFFI).

This sequence belongs to the PsaI family.

The protein localises to the plastid. Its subcellular location is the chloroplast thylakoid membrane. Functionally, may help in the organization of the PsaL subunit. The polypeptide is Photosystem I reaction center subunit VIII (Phaeodactylum tricornutum (strain CCAP 1055/1)).